Reading from the N-terminus, the 51-residue chain is Putative antitoxin VapB6 (51 aa).

Functionally, antitoxin component of a possible type II toxin-antitoxin (TA) system. The cognate toxin is VapC6. This is Putative antitoxin VapB6 (vapB6) from Mycobacterium tuberculosis (strain CDC 1551 / Oshkosh).